Here is a 563-residue protein sequence, read N- to C-terminus: Urocanate hydratase (563 aa).

NAD(+) contacts are provided by residues G53–G54, Q131, G177–G179, E197, R202, N243–A244, Q264–H268, Y274–L275, and Y323. C411 is an active-site residue. Residue G493 coordinates NAD(+).

The protein belongs to the urocanase family. NAD(+) is required as a cofactor.

It localises to the cytoplasm. It carries out the reaction 4-imidazolone-5-propanoate = trans-urocanate + H2O. It participates in amino-acid degradation; L-histidine degradation into L-glutamate; N-formimidoyl-L-glutamate from L-histidine: step 2/3. Functionally, catalyzes the conversion of urocanate to 4-imidazolone-5-propionate. The chain is Urocanate hydratase from Yersinia pestis bv. Antiqua (strain Antiqua).